The primary structure comprises 112 residues: Protein ORF1 (112 aa).

Low complexity predominate over residues 1-10 (MEGTDWSGWG). Residues 1-20 (MEGTDWSGWGDDSDFPWPKG) are disordered. Residues 51-71 (IAFVILIVSLFVLLLGVLLAC) form a helical membrane-spanning segment.

The protein resides in the host membrane. This is Protein ORF1 from Snake adenovirus serotype 1 (SnAdV-1).